A 400-amino-acid chain; its full sequence is Probable aspartate/prephenate aminotransferase (400 aa).

L-aspartate-binding residues include glycine 39, tryptophan 125, and asparagine 175. At lysine 239 the chain carries N6-(pyridoxal phosphate)lysine. L-aspartate is bound at residue arginine 375.

The protein belongs to the class-I pyridoxal-phosphate-dependent aminotransferase family. In terms of assembly, homodimer. Pyridoxal 5'-phosphate is required as a cofactor.

It localises to the cytoplasm. It catalyses the reaction L-aspartate + 2-oxoglutarate = oxaloacetate + L-glutamate. The catalysed reaction is L-arogenate + 2-oxoglutarate = prephenate + L-glutamate. In terms of biological role, catalyzes the reversible conversion of aspartate and 2-oxoglutarate to glutamate and oxaloacetate. Can also transaminate prephenate in the presence of glutamate. This chain is Probable aspartate/prephenate aminotransferase (aspC), found in Rhizobium leguminosarum bv. phaseoli.